Here is a 402-residue protein sequence, read N- to C-terminus: Arginine deiminase (402 aa).

Catalysis depends on Cys-391, which acts as the Amidino-cysteine intermediate.

Belongs to the arginine deiminase family.

The protein localises to the cytoplasm. The catalysed reaction is L-arginine + H2O = L-citrulline + NH4(+). The protein operates within amino-acid degradation; L-arginine degradation via ADI pathway; carbamoyl phosphate from L-arginine: step 1/2. The polypeptide is Arginine deiminase (Mycobacterium marinum (strain ATCC BAA-535 / M)).